A 285-amino-acid chain; its full sequence is HTH-type transcriptional regulator MurR (285 aa).

An HTH rpiR-type domain is found at 1 to 77 (MLYLTKISNA…MALIGEYSAS (77 aa)). Positions 37-56 (SRQMAKQLGISQSSIVKFAQ) form a DNA-binding region, H-T-H motif. One can recognise an SIS domain in the interval 128-268 (IIEVISKAPF…FVGLVQLNDV (141 aa)).

In terms of assembly, homotetramer.

Its pathway is amino-sugar metabolism; N-acetylmuramate degradation [regulation]. Its function is as follows. Represses the expression of the murPQ operon involved in the uptake and degradation of N-acetylmuramic acid (MurNAc). Binds to two adjacent inverted repeats within the operator region. MurNAc 6-phosphate, the substrate of MurQ, is the specific inducer that weakens binding of MurR to the operator. This chain is HTH-type transcriptional regulator MurR, found in Escherichia coli (strain K12 / MC4100 / BW2952).